The sequence spans 529 residues: Intraflagellar transport protein 56 (529 aa).

The interval 1 to 21 (MLHNRMTTAFERSKEQEHEAA) is disordered. A compositionally biased stretch (basic and acidic residues) spans 11–21 (ERSKEQEHEAA). 6 TPR repeats span residues 57–90 (GNAD…KNPP), 154–187 (SADQ…QPEC), 189–221 (AIYM…AEDS), 285–321 (SEAR…EYTL), 359–392 (VLGR…PKES), and 428–461 (PVHR…SLQT).

This sequence belongs to the IFT56 family.

The protein localises to the cell projection. Its subcellular location is the cilium. It localises to the flagellum. The protein resides in the cytoplasm. It is found in the cytoskeleton. The protein localises to the flagellum axoneme. Its subcellular location is the flagellum basal body. Component of the intraflagellar transport complex B (IFT-B) involved in flagellar assembly. This Giardia intestinalis (strain ATCC 50803 / WB clone C6) (Giardia lamblia) protein is Intraflagellar transport protein 56.